Reading from the N-terminus, the 1293-residue chain is Phosphoribosylformylglycinamidine synthase (1293 aa).

Residues 305–316 (GAATGSGGEIRD), 384–386 (TGY), and alanine 676 contribute to the ATP site. The tract at residues 307-326 (ATGSGGEIRDEGATGRGSKP) is disordered. Mg(2+) is bound by residues aspartate 677, glutamate 716, asparagine 720, and aspartate 884. Serine 886 serves as a coordination point for ATP. The Glutamine amidotransferase type-1 domain occupies 1040-1293 (MAILREQGVN…MFRNARVKIG (254 aa)). Residue cysteine 1133 is the Nucleophile of the active site. Active-site residues include histidine 1258 and glutamate 1260.

This sequence in the N-terminal section; belongs to the FGAMS family. In terms of assembly, monomer.

It is found in the cytoplasm. It carries out the reaction N(2)-formyl-N(1)-(5-phospho-beta-D-ribosyl)glycinamide + L-glutamine + ATP + H2O = 2-formamido-N(1)-(5-O-phospho-beta-D-ribosyl)acetamidine + L-glutamate + ADP + phosphate + H(+). The protein operates within purine metabolism; IMP biosynthesis via de novo pathway; 5-amino-1-(5-phospho-D-ribosyl)imidazole from N(2)-formyl-N(1)-(5-phospho-D-ribosyl)glycinamide: step 1/2. Phosphoribosylformylglycinamidine synthase involved in the purines biosynthetic pathway. Catalyzes the ATP-dependent conversion of formylglycinamide ribonucleotide (FGAR) and glutamine to yield formylglycinamidine ribonucleotide (FGAM) and glutamate. The sequence is that of Phosphoribosylformylglycinamidine synthase from Shewanella frigidimarina (strain NCIMB 400).